A 313-amino-acid polypeptide reads, in one-letter code: Fe-S cluster assembly protein dre2 (313 aa).

Disordered stretches follow at residues 1 to 25 (MSIT…SQKR) and 151 to 187 (GRKK…AQNN). The tract at residues 20 to 145 (NGSQKRNLLL…FEKPVQEAAV (126 aa)) is N-terminal SAM-like domain. The tract at residues 146–203 (PLKLGGRKKKDKTNGVNGVQNGVATNGASTNGVGMFDPAQNNDDELIDEDALLSDDDL) is linker. The span at 159-177 (NGVNGVQNGVATNGASTNG) shows a compositional bias: polar residues. Cys213, Cys225, Cys228, and Cys230 together coordinate [2Fe-2S] cluster. The segment at 213–230 (CVPETAKKRRRPCKDCTC) is fe-S binding site A. Residues Cys276, Cys279, Cys287, and Cys290 each coordinate [4Fe-4S] cluster. Short sequence motifs (cx2C motif) lie at residues 276 to 279 (CNSC) and 287 to 290 (CSSC). The tract at residues 276–290 (CNSCSLGDAFRCSSC) is fe-S binding site B.

Belongs to the anamorsin family. Monomer. Interacts with tah18. Interacts with mia40. It depends on [2Fe-2S] cluster as a cofactor. [4Fe-4S] cluster serves as cofactor.

The protein localises to the cytoplasm. It localises to the mitochondrion intermembrane space. Component of the cytosolic iron-sulfur (Fe-S) protein assembly (CIA) machinery required for the maturation of extramitochondrial Fe-S proteins. Part of an electron transfer chain functioning in an early step of cytosolic Fe-S biogenesis, facilitating the de novo assembly of a [4Fe-4S] cluster on the scaffold complex cfd1-nbp35. Electrons are transferred to dre2 from NADPH via the FAD- and FMN-containing protein tah18. Tah18-dre2 are also required for the assembly of the diferric tyrosyl radical cofactor of ribonucleotide reductase (RNR), probably by providing electrons for reduction during radical cofactor maturation in the catalytic small subunit rnr2. This Aspergillus oryzae (strain ATCC 42149 / RIB 40) (Yellow koji mold) protein is Fe-S cluster assembly protein dre2.